A 631-amino-acid polypeptide reads, in one-letter code: MSATKLTRREQRARAQHFIDTLEGTAFPNSKRIYITGTHPGVRVPMREIQLSPTLIGGSKEQPQYEENEAIPVYDTSGPYGDPQIAINVQQGLAKLRQPWIDARGDTEELTVRSSDYTKARLADDGLDELRFSGVLTPKRAKAGRRVTQLHYARQGIITPEMEFIAIRENMGRERIRSEVLRHQHPGMSFGAHLPENITAEFVRDEVAAGRAIIPANINHPESEPMIIGRNFLVKVNANIGNSAVTSSIEEEVEKLVWSTRWGADTVMDLSTGRYIHETREWILRNSPVPIGTVPIYQALEKVNGIAEDLTWEAFRDTLLEQAEQGVDYFTIHAGVLLRYVPMTAKRLTGIVSRGGSIMAKWCLSHHQENFLYQHFREICEICAAYDVSLSLGDGLRPGSIQDANDEAQFAELHTLGELTKIAWEYDVQVMIEGPGHVPMQMIRRNMTEELEHCHEAPFYTLGPLTTDIAPGYDHFTSGIGAAMIGWFGCAMLCYVTPKEHLGLPNKEDVKQGLITYKIAAHAADLAKGHPGAQIRDNAMSKARFEFRWEDQFNLALDPFTARAYHDETLPQESGKVAHFCSMCGPKFCSMKISQEVRDYAATQTIEMGMADMSENFRARGGEIYLRKEEA.

Substrate-binding positions include Asn-239, Met-268, Tyr-297, His-333, 353–355 (SRG), 394–397 (DGLR), and Glu-433. His-437 lines the Zn(2+) pocket. Tyr-460 is a binding site for substrate. A Zn(2+)-binding site is contributed by His-501. 3 residues coordinate [4Fe-4S] cluster: Cys-581, Cys-584, and Cys-589.

This sequence belongs to the ThiC family. Homodimer. The cofactor is [4Fe-4S] cluster.

It catalyses the reaction 5-amino-1-(5-phospho-beta-D-ribosyl)imidazole + S-adenosyl-L-methionine = 4-amino-2-methyl-5-(phosphooxymethyl)pyrimidine + CO + 5'-deoxyadenosine + formate + L-methionine + 3 H(+). It functions in the pathway cofactor biosynthesis; thiamine diphosphate biosynthesis. Its function is as follows. Catalyzes the synthesis of the hydroxymethylpyrimidine phosphate (HMP-P) moiety of thiamine from aminoimidazole ribotide (AIR) in a radical S-adenosyl-L-methionine (SAM)-dependent reaction. The sequence is that of Phosphomethylpyrimidine synthase from Escherichia coli O8 (strain IAI1).